Reading from the N-terminus, the 285-residue chain is tRNA pseudouridine synthase B (285 aa).

The active-site Nucleophile is Asp-38.

The protein belongs to the pseudouridine synthase TruB family. Type 1 subfamily.

The enzyme catalyses uridine(55) in tRNA = pseudouridine(55) in tRNA. In terms of biological role, responsible for synthesis of pseudouridine from uracil-55 in the psi GC loop of transfer RNAs. This is tRNA pseudouridine synthase B from Geobacillus kaustophilus (strain HTA426).